Consider the following 852-residue polypeptide: Tiger protein I3 (852 aa).

A signal peptide spans 1 to 18; it reads MKILLFFILFYLFSFSIS. At 19–830 the chain is on the extracellular side; sequence YDEVIPLGYE…DVHQYSDARN (812 aa). 31 N-linked (GlcNAc...) asparagine glycosylation sites follow: asparagine 31, asparagine 47, asparagine 67, asparagine 97, asparagine 129, asparagine 201, asparagine 215, asparagine 228, asparagine 260, asparagine 323, asparagine 352, asparagine 356, asparagine 404, asparagine 441, asparagine 476, asparagine 483, asparagine 501, asparagine 512, asparagine 574, asparagine 592, asparagine 635, asparagine 658, asparagine 661, asparagine 679, asparagine 680, asparagine 723, asparagine 757, asparagine 761, asparagine 773, asparagine 785, and asparagine 800. One can recognise an IPT/TIG domain in the interval 290–367; the sequence is IPSIVNSIPK…SSPIAVSIND (78 aa). Residues 831–851 form a helical membrane-spanning segment; sequence IFQNLLLSILIIIIISLFISN. A topological domain (cytoplasmic) is located at residue isoleucine 852.

The protein resides in the membrane. This is Tiger protein I3 (tgrI3) from Dictyostelium discoideum (Social amoeba).